The following is a 3163-amino-acid chain: Genome polyprotein (3163 aa).

One can recognise a Peptidase S30 domain in the interval 219 to 362; that stretch reads KMSDQGVDML…KTMSLKIVHF (144 aa). Active-site for P1 proteinase activity residues include His-270, Asp-279, and Ser-313. The Involved in interaction with stylet and aphid transmission motif lies at 414–417; it reads KITC. The short motif at 672–674 is the Involved in virions binding and aphid transmission element; the sequence is PTK. In terms of domain architecture, Peptidase C6 spans 698 to 820; it reads MYIAKEGYCY…ESSLKHYRVG (123 aa). Active-site for helper component proteinase activity residues include Cys-706 and His-779. The region spanning 1300–1452 is the Helicase ATP-binding domain; it reads KIAHESDKDI…TQYPVSISTE (153 aa). 1313 to 1320 provides a ligand contact to ATP; that stretch reads GAVGSGKS. The DEAH box motif lies at 1402 to 1405; that stretch reads DECH. The 160-residue stretch at 1471–1630 folds into the Helicase C-terminal domain; the sequence is DVISKGDNIL…GLPVITNNVS (160 aa). Residues 1871–1888 lie on the Cytoplasmic side of the membrane; sequence STNEMSKFLQLKGKWNKT. The chain crosses the membrane as a helical span at residues 1889–1909; sequence LITRDVLVICGVLGGGVWMVV. Residues 1910 to 1923 lie on the Lumenal side of the membrane; the sequence is QHFRSKVSEPVTHE. Positions 1964–1971 match the Nuclear localization signal motif; the sequence is KKGKSKGR. Residues 1983-2017 form a binding to host eIF(iso)4E region; sequence INMYGFDPEDFSAVRFVDPLTGATLDDNPFTDITL. Tyr-1986 carries the post-translational modification O-(5'-phospho-RNA)-tyrosine. A Peptidase C4 domain is found at 2116–2334; that stretch reads SNSMFRGLRD…ISWGSLNIQA (219 aa). Residues His-2161, Asp-2196, and Cys-2266 each act as for nuclear inclusion protein A activity in the active site. Residues 2600–2724 form the RdRp catalytic domain; sequence WVYCDADGSQ…SVHPEYEYIL (125 aa). The segment at 2883–2934 is disordered; that stretch reads DLTEEQKQAEKEKKEREKAEKERERQKQLAFKKGKDVAQEEGKRDKEVNAGT. Residues 2886-2930 show a composition bias toward basic and acidic residues; it reads EEQKQAEKEKKEREKAEKERERQKQLAFKKGKDVAQEEGKRDKEV.

The protein belongs to the potyviridae genome polyprotein family. As to quaternary structure, interacts with host eIF4E protein (via cap-binding region); this interaction mediates the translation of the VPg-viral RNA conjugates. Part of a complex that comprises VPg, RNA, host EIF4E and EIF4G; this interaction mediates the translation of the VPg-viral RNA conjugates. Interacts, via N-terminal region, with host Sec24a protein in COPII-coated vesicles. This binding triggers the formation of host endoplasmic reticulum (ER)-derived viral vesicles involved in cell-to-cell viral movement. In terms of processing, VPg is uridylylated by the polymerase and is covalently attached to the 5'-end of the genomic RNA. This uridylylated form acts as a nucleotide-peptide primer for the polymerase. Potyviral RNA is expressed as two polyproteins which undergo post-translational proteolytic processing. Genome polyprotein is processed by NIa-pro, P1 and HC-pro proteinases resulting in the production of at least ten individual proteins. P3N-PIPO polyprotein is cleaved by P1 and HC-pro proteinases resulting in the production of three individual proteins. The P1 proteinase and the HC-pro cleave only their respective C-termini autocatalytically. 6K1 is essential for proper proteolytic separation of P3 from CI.

It localises to the host cytoplasm. It is found in the host nucleus. Its subcellular location is the host cytoplasmic vesicle. The protein localises to the host membrane. The protein resides in the virion. It carries out the reaction RNA(n) + a ribonucleoside 5'-triphosphate = RNA(n+1) + diphosphate. The enzyme catalyses Hydrolyzes glutaminyl bonds, and activity is further restricted by preferences for the amino acids in P6 - P1' that vary with the species of potyvirus, e.g. Glu-Xaa-Xaa-Tyr-Xaa-Gln-|-(Ser or Gly) for the enzyme from tobacco etch virus. The natural substrate is the viral polyprotein, but other proteins and oligopeptides containing the appropriate consensus sequence are also cleaved.. The catalysed reaction is Hydrolyzes a Gly-|-Gly bond at its own C-terminus, commonly in the sequence -Tyr-Xaa-Val-Gly-|-Gly, in the processing of the potyviral polyprotein.. Functionally, cysteine protease that cleaves a Gly-Gly dipeptide at its own C-terminus. Required for aphid transmission and also has proteolytic activity. Interacts with virions and aphid stylets. Acts as a suppressor of RNA-mediated gene silencing, also known as post-transcriptional gene silencing (PTGS), a mechanism of plant viral defense that limits the accumulation of viral RNAs. May have RNA-binding activity. In terms of biological role, has helicase activity. It may be involved in replication. Indispensable for virus replication. Its function is as follows. Responsible for the formation of peripheral motile host endoplasmic reticulum (ER)-derived viral vesicles called 'viral factories', seat of the viral RNA (vRNA) replication and carrying vRNA to plasmodesmata for delivery into adjacent non-infected cells; this process relies on host Sec24a-binding. Functionally, mediates the cap-independent, EIF4E-dependent translation of viral genomic RNAs. Binds to the cap-binding site of host EIF4E and thus interferes with the host EIF4E-dependent mRNA export and translation. VPg-RNA directly binds EIF4E and is a template for transcription. Also forms trimeric complexes with EIF4E-EIF4G, which are templates for translation. In terms of biological role, has RNA-binding and proteolytic activities. RNA-dependent RNA polymerase that ensures transcription and replication of viral RNA (vRNA). Its function is as follows. Involved in aphid transmission, cell-to-cell and systemis movement, encapsidation of the viral RNA and in the regulation of viral RNA amplification. The chain is Genome polyprotein from Brassica (TuMV).